We begin with the raw amino-acid sequence, 48 residues long: Small, acid-soluble spore protein P (48 aa).

Residues 1 to 19 (MTNKNTGKDIRQNSPKEHQ) are compositionally biased toward basic and acidic residues. The disordered stretch occupies residues 1–48 (MTNKNTGKDIRQNSPKEHQSGQPEPLSGSKKVKNRNHTRQKHNSHHDM). The span at 30-48 (KKVKNRNHTRQKHNSHHDM) shows a compositional bias: basic residues.

The protein belongs to the SspP family.

It localises to the spore core. The protein is Small, acid-soluble spore protein P of Bacillus pumilus (strain SAFR-032).